Here is a 334-residue protein sequence, read N- to C-terminus: Ribosomal RNA small subunit methyltransferase H (334 aa).

Residues 39-41, D59, F83, D100, and Q107 each bind S-adenosyl-L-methionine; that span reads GGH. Residues 303 to 334 form a disordered region; that stretch reads ERTQAHGAERSDMRRAERPDARRAEHGEVLPP.

This sequence belongs to the methyltransferase superfamily. RsmH family.

It is found in the cytoplasm. The enzyme catalyses cytidine(1402) in 16S rRNA + S-adenosyl-L-methionine = N(4)-methylcytidine(1402) in 16S rRNA + S-adenosyl-L-homocysteine + H(+). In terms of biological role, specifically methylates the N4 position of cytidine in position 1402 (C1402) of 16S rRNA. The protein is Ribosomal RNA small subunit methyltransferase H of Verminephrobacter eiseniae (strain EF01-2).